A 351-amino-acid polypeptide reads, in one-letter code: UDP-N-acetylenolpyruvoylglucosamine reductase (351 aa).

The FAD-binding PCMH-type domain occupies 11–213; the sequence is GVGGSIACFI…KQVRDQVLRI (203 aa). Arg158 is a catalytic residue. Residue Ser239 is the Proton donor of the active site. Glu343 is an active-site residue.

The protein belongs to the MurB family. Requires FAD as cofactor.

It is found in the cytoplasm. The enzyme catalyses UDP-N-acetyl-alpha-D-muramate + NADP(+) = UDP-N-acetyl-3-O-(1-carboxyvinyl)-alpha-D-glucosamine + NADPH + H(+). Its pathway is cell wall biogenesis; peptidoglycan biosynthesis. In terms of biological role, cell wall formation. The protein is UDP-N-acetylenolpyruvoylglucosamine reductase of Tropheryma whipplei (strain TW08/27) (Whipple's bacillus).